Reading from the N-terminus, the 282-residue chain is Sulfur carrier protein FdhD (282 aa).

Cys-115 serves as the catalytic Cysteine persulfide intermediate.

The protein belongs to the FdhD family.

It localises to the cytoplasm. Its function is as follows. Required for formate dehydrogenase (FDH) activity. Acts as a sulfur carrier protein that transfers sulfur from IscS to the molybdenum cofactor prior to its insertion into FDH. This Streptomyces coelicolor (strain ATCC BAA-471 / A3(2) / M145) protein is Sulfur carrier protein FdhD.